Here is a 547-residue protein sequence, read N- to C-terminus: MAAKDVYFSSDARDKMLRGVNILANAVKVTLGPKGRNVVIEKSFGAPRTTKDGVSVAKEIELADKFENLGAQMIREVASKTNDKAGDGTTTATVLAQAIVQEGLKSVAAGMNPMDLKRGIDKAVAIAIEDIKTSSKKVTTNAEIAQVGTISANGDKEVGEMIAKAMDKVGNEGVITVEEAKTAETELDVVEGMQFDRGYLSPYFITNADKMEVQLEEPLILLFEKKLSSLQPLLPVLEAVVQSGRPLLIIAEDVEGEALATLVVNKLRGGLRVAAVKAPGFGDRRKAMLEDIAILTGAQVVSEDIGIKLENVSLEMLGRAKKVSITKDDTTIVDGVGEKADIEARIAQIKRQIEDTTSDYDKEKLQERLAKLAGGVAVIRVGGSTEVEVKEKKDRVDDALNATRAAADEGIVPGGGTALLKASKALAGVVGDNDDQTAGIAIVRRALQAPIRQIAENAGVEGSIVVGKILENDNSAFGFNAQTEQYVDLVVDGVIDPAKVVRTALQNAASVAGLLITTEAAIVEAPKKGGGAPAGGGMPGGMGDMDF.

ATP is bound by residues 30-33 (TLGP), lysine 51, 87-91 (DGTTT), glycine 415, and aspartate 496. The segment at 528–547 (KGGGAPAGGGMPGGMGDMDF) is disordered.

This sequence belongs to the chaperonin (HSP60) family. As to quaternary structure, forms a cylinder of 14 subunits composed of two heptameric rings stacked back-to-back. Interacts with the co-chaperonin GroES.

It is found in the cytoplasm. The enzyme catalyses ATP + H2O + a folded polypeptide = ADP + phosphate + an unfolded polypeptide.. Functionally, together with its co-chaperonin GroES, plays an essential role in assisting protein folding. The GroEL-GroES system forms a nano-cage that allows encapsulation of the non-native substrate proteins and provides a physical environment optimized to promote and accelerate protein folding. This is Chaperonin GroEL from Caulobacter vibrioides (strain ATCC 19089 / CIP 103742 / CB 15) (Caulobacter crescentus).